A 634-amino-acid chain; its full sequence is 1-deoxy-D-xylulose-5-phosphate synthase (634 aa).

Thiamine diphosphate is bound by residues His74 and 115–117; that span reads AHS. Residue Asp146 participates in Mg(2+) binding. Thiamine diphosphate contacts are provided by residues 147 to 148, Asn176, Tyr283, and Glu365; that span reads GA. Position 176 (Asn176) interacts with Mg(2+).

The protein belongs to the transketolase family. DXPS subfamily. As to quaternary structure, homodimer. Mg(2+) is required as a cofactor. The cofactor is thiamine diphosphate.

It carries out the reaction D-glyceraldehyde 3-phosphate + pyruvate + H(+) = 1-deoxy-D-xylulose 5-phosphate + CO2. The protein operates within metabolic intermediate biosynthesis; 1-deoxy-D-xylulose 5-phosphate biosynthesis; 1-deoxy-D-xylulose 5-phosphate from D-glyceraldehyde 3-phosphate and pyruvate: step 1/1. Functionally, catalyzes the acyloin condensation reaction between C atoms 2 and 3 of pyruvate and glyceraldehyde 3-phosphate to yield 1-deoxy-D-xylulose-5-phosphate (DXP). The polypeptide is 1-deoxy-D-xylulose-5-phosphate synthase (Burkholderia thailandensis (strain ATCC 700388 / DSM 13276 / CCUG 48851 / CIP 106301 / E264)).